Reading from the N-terminus, the 113-residue chain is Protein S100-A9 (113 aa).

N-acetylalanine is present on alanine 2. EF-hand domains are found at residues isoleucine 13–threonine 48 and arginine 55–alanine 90. Histidine 21 serves as a coordination point for Zn(2+). Residues serine 24 and histidine 29 each coordinate Ca(2+). A Zn(2+)-binding site is contributed by aspartate 31. Residues threonine 32, glutamate 37, aspartate 68, asparagine 70, aspartate 72, glutamine 74, and glutamate 79 each coordinate Ca(2+). Zn(2+) is bound by residues histidine 92 and histidine 96. A Pros-methylhistidine modification is found at histidine 107.

Belongs to the S-100 family. As to quaternary structure, homodimer. Preferentially exists as a heterodimer or heterotetramer with S100A8 known as calprotectin (S100A8/A9). S100A9 interacts with ATP2A2. S100A9 interacts with AGER, and with the heterodimeric complex formed by TLR4 and LY96 in the presence of calcium and/or zinc ions. S100A9 binds quinoline-3-carboxamides in the presence of calcium and/or zinc ions. S100A9 interacts with amyloid-beta protein 40. Calprotectin (S100A8/9) interacts with CEACAM3 and tubulin filaments in a calcium-dependent manner. Heterotetrameric calprotectin (S100A8/A9) interacts with ANXA6 and associates with tubulin filaments in activated monocytes. Calprotectin (S100A8/9) interacts with NCF2/P67PHOX, RAC1, RAC2, CYBA and CYBB. Calprotectin (S100A8/9) interacts with NOS2 to form the iNOS-S100A8/A9 transnitrosylase complex; induced by LDL(ox). Calprotectin (S100A8/9) interacts with CD69. Post-translationally, phosphorylated. Phosphorylation inhibits activation of tubulin polymerization. In terms of processing, methylation at His-107 by METTL9 reduces zinc-binding without affecting heterodimerization with S100A8.

The protein resides in the secreted. Its subcellular location is the cytoplasm. It localises to the cytoskeleton. It is found in the cell membrane. In terms of biological role, S100A9 is a calcium- and zinc-binding protein which plays a prominent role in the regulation of inflammatory processes and immune response. It can induce neutrophil chemotaxis, adhesion, can increase the bactericidal activity of neutrophils by promoting phagocytosis via activation of SYK, PI3K/AKT, and ERK1/2 and can induce degranulation of neutrophils by a MAPK-dependent mechanism. Predominantly found as calprotectin (S100A8/A9) which has a wide plethora of intra- and extracellular functions. The intracellular functions include: facilitating leukocyte arachidonic acid trafficking and metabolism, modulation of the tubulin-dependent cytoskeleton during migration of phagocytes and activation of the neutrophilic NADPH-oxidase. Also participates in regulatory T-cell differentiation together with CD69. Activates NADPH-oxidase by facilitating the enzyme complex assembly at the cell membrane, transferring arachidonic acid, an essential cofactor, to the enzyme complex and S100A8 contributes to the enzyme assembly by directly binding to NCF2/P67PHOX. The extracellular functions involve pro-inflammatory, antimicrobial, oxidant-scavenging and apoptosis-inducing activities. Its pro-inflammatory activity includes recruitment of leukocytes, promotion of cytokine and chemokine production, and regulation of leukocyte adhesion and migration. Acts as an alarmin or a danger associated molecular pattern (DAMP) molecule and stimulates innate immune cells via binding to pattern recognition receptors such as Toll-like receptor 4 (TLR4) and receptor for advanced glycation endproducts (AGER). Binding to TLR4 and AGER activates the MAP-kinase and NF-kappa-B signaling pathways resulting in the amplification of the pro-inflammatory cascade. Has antimicrobial activity towards bacteria and fungi and exerts its antimicrobial activity probably via chelation of Zn(2+) which is essential for microbial growth. Can induce cell death via autophagy and apoptosis and this occurs through the cross-talk of mitochondria and lysosomes via reactive oxygen species (ROS) and the process involves BNIP3. Can regulate neutrophil number and apoptosis by an anti-apoptotic effect; regulates cell survival via ITGAM/ITGB and TLR4 and a signaling mechanism involving MEK-ERK. Its role as an oxidant scavenger has a protective role in preventing exaggerated tissue damage by scavenging oxidants. The iNOS-S100A8/A9 transnitrosylase complex is proposed to direct selective inflammatory stimulus-dependent S-nitrosylation of multiple targets such as GAPDH, NXA5, EZR, MSN and VIM by recognizing a [IL]-x-C-x-x-[DE] motif. This is Protein S100-A9 (S100a9) from Mus musculus (Mouse).